Here is a 400-residue protein sequence, read N- to C-terminus: Delta(12) fatty acid desaturase (400 aa).

Residues 91 to 111 (LAWPAYWIMQGIVCTGIWVLA) form a helical membrane-spanning segment. Positions 112-116 (HECGH) match the Histidine box-1 motif. The Histidine box-2 signature appears at 148–152 (HSKHH). 3 helical membrane-spanning segments follow: residues 199–219 (IVTL…YLIM), 245–265 (FFDI…LIYA), and 277–297 (YYII…FLQH). The short motif at 339 to 343 (HVAHH) is the Histidine box-3 element.

It belongs to the fatty acid desaturase type 1 family.

It is found in the membrane. The enzyme catalyses (9Z)-octadecenoyl-CoA + 2 Fe(II)-[cytochrome b5] + O2 + 2 H(+) = (9Z,12Z)-octadecadienoyl-CoA + 2 Fe(III)-[cytochrome b5] + 2 H2O. It catalyses the reaction (9Z)-hexadecenoyl-CoA + 2 Fe(II)-[cytochrome b5] + O2 + 2 H(+) = (9Z,12Z)-hexadecadienoyl-CoA + 2 Fe(III)-[cytochrome b5] + 2 H2O. It functions in the pathway lipid metabolism; polyunsaturated fatty acid biosynthesis. Functionally, catalyzes the desaturation of oleic acid (Delta(9)-18:1) to linoleic acid (Delta(9), Delta(12)-18:2). The protein is Delta(12) fatty acid desaturase of Mortierella isabellina (Filamentous fungus).